The primary structure comprises 272 residues: Glutamate racemase (272 aa).

Residues 10-11 (DS) and 42-43 (YG) contribute to the substrate site. The active-site Proton donor/acceptor is Cys73. 74–75 (NT) contacts substrate. Cys183 functions as the Proton donor/acceptor in the catalytic mechanism. 184–185 (TH) contributes to the substrate binding site.

This sequence belongs to the aspartate/glutamate racemases family.

The catalysed reaction is L-glutamate = D-glutamate. The protein operates within cell wall biogenesis; peptidoglycan biosynthesis. Functionally, provides the (R)-glutamate required for cell wall biosynthesis. The chain is Glutamate racemase from Leifsonia xyli subsp. xyli (strain CTCB07).